We begin with the raw amino-acid sequence, 605 residues long: Endonuclease 8-like 3 (605 aa).

The Schiff-base intermediate with DNA; via amino nitrogen role is filled by valine 2. DNA is bound by residues asparagine 192 and arginine 271. An FPG-type zinc finger spans residues 247–281; the sequence is KVYKRPNCGQCHCRITVCRFGDNNRMTYFCPHCQK. Residues 317–346 form a RanBP2-type zinc finger; sequence SEEHWTCVVCTLINKPSSKACDACLTSRPI. The residue at position 450 (serine 450) is a Phosphoserine. The disordered stretch occupies residues 456 to 477; the sequence is ESKLFSPAHKKPKTAQYSSPEL. Cysteine 507, histidine 510, cysteine 533, cysteine 541, cysteine 554, histidine 556, cysteine 579, and cysteine 587 together coordinate Zn(2+). 2 GRF-type zinc fingers span residues 507-550 and 554-596; these read CSKH…ADLS and CNHG…AENG.

This sequence belongs to the FPG family. As to expression, expressed in keratinocytes and embryonic fibroblasts (at protein level). Also detected in thymus, testis and fetal lung primary fibroblasts.

Its subcellular location is the nucleus. It localises to the chromosome. The enzyme catalyses 2'-deoxyribonucleotide-(2'-deoxyribose 5'-phosphate)-2'-deoxyribonucleotide-DNA = a 3'-end 2'-deoxyribonucleotide-(2,3-dehydro-2,3-deoxyribose 5'-phosphate)-DNA + a 5'-end 5'-phospho-2'-deoxyribonucleoside-DNA + H(+). In terms of biological role, DNA glycosylase which prefers single-stranded DNA (ssDNA), or partially ssDNA structures such as bubble and fork structures, to double-stranded DNA (dsDNA). Mediates interstrand cross-link repair in response to replication stress: acts by mediating DNA glycosylase activity, cleaving one of the two N-glycosyl bonds comprising the interstrand cross-link, which avoids the formation of a double-strand break but generates an abasic site that is bypassed by translesion synthesis polymerases. In vitro, displays strong glycosylase activity towards the hydantoin lesions spiroiminodihydantoin (Sp) and guanidinohydantoin (Gh) in both ssDNA and dsDNA; also recognizes FapyA, FapyG, 5-OHU, 5-OHC, 5-OHMH, Tg and 8-oxoA lesions in ssDNA. No activity on 8-oxoG detected. Also shows weak DNA-(apurinic or apyrimidinic site) lyase activity. In vivo, appears to be the primary enzyme involved in removing Sp and Gh from ssDNA in neonatal tissues. The chain is Endonuclease 8-like 3 (NEIL3) from Homo sapiens (Human).